The following is a 248-amino-acid chain: MNDRIIEFEPLIEGILIKRYKRFLADIQIENGEIVTAHCANTGPMKGLLNEGANVRISFSSSTKRKLPWTWEQVKVIGRDNKEVWVGINTLFANKLIRKVIEQNLFKDKLGEIAKIKSEVPYGKDKKSRIDFLLTPKSSNPDNRNIYVEVKNTTWTKNNVALFPDTETKRGQKHLIELKGLIPESKSVLVPCITRKDIDYFAPGDESDPLYGELFRESISAGMLLIPCCFEFHSDHVAWKGFKPLKLN.

The protein belongs to the SfsA family.

This chain is Sugar fermentation stimulation protein homolog, found in Prochlorococcus marinus subsp. pastoris (strain CCMP1986 / NIES-2087 / MED4).